Reading from the N-terminus, the 155-residue chain is MKIQLIAVGTKMPNWVTMGFEEYQRRFPKEMPFELIEIPAGKRGKNADIKRILEQEGKAMLAACGKSRIVTLDIPGKPWTTEQLATQLEVWKNDGRDLSLLIGGPEGLSAECKAAAEQSWSLSPLTLPHPLVRVVVAESLYRAWSVTMNHPYHRE.

S-adenosyl-L-methionine contacts are provided by residues Leu72, Gly103, and 122–127 (LSPLTL).

Belongs to the RNA methyltransferase RlmH family. Homodimer.

The protein localises to the cytoplasm. It carries out the reaction pseudouridine(1915) in 23S rRNA + S-adenosyl-L-methionine = N(3)-methylpseudouridine(1915) in 23S rRNA + S-adenosyl-L-homocysteine + H(+). Its function is as follows. Specifically methylates the pseudouridine at position 1915 (m3Psi1915) in 23S rRNA. This is Ribosomal RNA large subunit methyltransferase H from Pasteurella multocida (strain Pm70).